A 617-amino-acid polypeptide reads, in one-letter code: Dihydroxy-acid dehydratase (617 aa).

Position 81 (Asp81) interacts with Mg(2+). Cys122 contributes to the [2Fe-2S] cluster binding site. Mg(2+) contacts are provided by Asp123 and Lys124. Lys124 is modified (N6-carboxylysine). Cys195 serves as a coordination point for [2Fe-2S] cluster. Glu491 is a binding site for Mg(2+). Residue Ser517 is the Proton acceptor of the active site.

The protein belongs to the IlvD/Edd family. Homodimer. [2Fe-2S] cluster serves as cofactor. Mg(2+) is required as a cofactor.

The enzyme catalyses (2R)-2,3-dihydroxy-3-methylbutanoate = 3-methyl-2-oxobutanoate + H2O. It carries out the reaction (2R,3R)-2,3-dihydroxy-3-methylpentanoate = (S)-3-methyl-2-oxopentanoate + H2O. It participates in amino-acid biosynthesis; L-isoleucine biosynthesis; L-isoleucine from 2-oxobutanoate: step 3/4. The protein operates within amino-acid biosynthesis; L-valine biosynthesis; L-valine from pyruvate: step 3/4. In terms of biological role, functions in the biosynthesis of branched-chain amino acids. Catalyzes the dehydration of (2R,3R)-2,3-dihydroxy-3-methylpentanoate (2,3-dihydroxy-3-methylvalerate) into 2-oxo-3-methylpentanoate (2-oxo-3-methylvalerate) and of (2R)-2,3-dihydroxy-3-methylbutanoate (2,3-dihydroxyisovalerate) into 2-oxo-3-methylbutanoate (2-oxoisovalerate), the penultimate precursor to L-isoleucine and L-valine, respectively. This chain is Dihydroxy-acid dehydratase, found in Rhodospirillum rubrum (strain ATCC 11170 / ATH 1.1.1 / DSM 467 / LMG 4362 / NCIMB 8255 / S1).